The sequence spans 228 residues: Elongation factor 1-beta (228 aa).

The tract at residues Ala-74 to Ala-116 is disordered. The segment at Glu-84–Lys-93 is igE-binding. Residues Ala-97–Pro-115 are compositionally biased toward acidic residues.

This sequence belongs to the EF-1-beta/EF-1-delta family. As to quaternary structure, EF-1 is composed of 4 subunits: alpha, beta, delta, and gamma.

Its function is as follows. EF-1-beta and EF-1-delta stimulate the exchange of GDP bound to EF-1-alpha to GTP. The protein is Elongation factor 1-beta of Penicillium citrinum.